Here is a 116-residue protein sequence, read N- to C-terminus: MNAKKEARLRRARRARAKIREQGVSRLSVNRTPRHIYAQIISPDGGQVLASASTLDKSLREGSTGNSDAAAKVGALIAERAKEAGITEVAFDRAGFKYHGRVKALADAAREGGLEF.

The protein belongs to the universal ribosomal protein uL18 family. Part of the 50S ribosomal subunit; part of the 5S rRNA/L5/L18/L25 subcomplex. Contacts the 5S and 23S rRNAs.

Functionally, this is one of the proteins that bind and probably mediate the attachment of the 5S RNA into the large ribosomal subunit, where it forms part of the central protuberance. The protein is Large ribosomal subunit protein uL18 of Chromohalobacter salexigens (strain ATCC BAA-138 / DSM 3043 / CIP 106854 / NCIMB 13768 / 1H11).